Reading from the N-terminus, the 463-residue chain is L-seryl-tRNA(Sec) selenium transferase (463 aa).

Position 295 is an N6-(pyridoxal phosphate)lysine (K295).

This sequence belongs to the SelA family. In terms of assembly, homodecamer; pentamer of dimers. Binds only one seryl-tRNA(Sec) per dimer. Pyridoxal 5'-phosphate serves as cofactor.

It localises to the cytoplasm. It catalyses the reaction L-seryl-tRNA(Sec) + selenophosphate + H(+) = L-selenocysteinyl-tRNA(Sec) + phosphate. Its pathway is aminoacyl-tRNA biosynthesis; selenocysteinyl-tRNA(Sec) biosynthesis; selenocysteinyl-tRNA(Sec) from L-seryl-tRNA(Sec) (bacterial route): step 1/1. Functionally, converts seryl-tRNA(Sec) to selenocysteinyl-tRNA(Sec) required for selenoprotein biosynthesis. The protein is L-seryl-tRNA(Sec) selenium transferase of Salmonella paratyphi B (strain ATCC BAA-1250 / SPB7).